The primary structure comprises 265 residues: Hydroxyethylthiazole kinase (265 aa).

Met-50 provides a ligand contact to substrate. Positions 125 and 171 each coordinate ATP. Position 198 (Gly-198) interacts with substrate.

It belongs to the Thz kinase family. The cofactor is Mg(2+).

The enzyme catalyses 5-(2-hydroxyethyl)-4-methylthiazole + ATP = 4-methyl-5-(2-phosphooxyethyl)-thiazole + ADP + H(+). Its pathway is cofactor biosynthesis; thiamine diphosphate biosynthesis; 4-methyl-5-(2-phosphoethyl)-thiazole from 5-(2-hydroxyethyl)-4-methylthiazole: step 1/1. Catalyzes the phosphorylation of the hydroxyl group of 4-methyl-5-beta-hydroxyethylthiazole (THZ). The sequence is that of Hydroxyethylthiazole kinase from Salmonella schwarzengrund (strain CVM19633).